The sequence spans 98 residues: MPSIFINIILAFATALLGTLVFRSHLMSSLLCLEGMMLSMFILSTLIILNMHFTMSFMMPILLLVFAACEAAVGLALLVMVSNTYGLDYIQNLNLLQC.

Helical transmembrane passes span 2 to 22 (PSIFINIILAFATALLGTLVF), 29 to 49 (SLLCLEGMMLSMFILSTLIIL), and 61 to 81 (ILLLVFAACEAAVGLALLVMV).

The protein belongs to the complex I subunit 4L family. In terms of assembly, core subunit of respiratory chain NADH dehydrogenase (Complex I) which is composed of 45 different subunits.

It is found in the mitochondrion inner membrane. The enzyme catalyses a ubiquinone + NADH + 5 H(+)(in) = a ubiquinol + NAD(+) + 4 H(+)(out). Its function is as follows. Core subunit of the mitochondrial membrane respiratory chain NADH dehydrogenase (Complex I) which catalyzes electron transfer from NADH through the respiratory chain, using ubiquinone as an electron acceptor. Part of the enzyme membrane arm which is embedded in the lipid bilayer and involved in proton translocation. The sequence is that of NADH-ubiquinone oxidoreductase chain 4L (MT-ND4L) from Propithecus tattersalli (Golden-crowned Sifaka).